A 104-amino-acid polypeptide reads, in one-letter code: Pyrimidine/purine nucleoside phosphorylase (104 aa).

This sequence belongs to the nucleoside phosphorylase PpnP family.

It carries out the reaction a purine D-ribonucleoside + phosphate = a purine nucleobase + alpha-D-ribose 1-phosphate. The catalysed reaction is adenosine + phosphate = alpha-D-ribose 1-phosphate + adenine. The enzyme catalyses cytidine + phosphate = cytosine + alpha-D-ribose 1-phosphate. It catalyses the reaction guanosine + phosphate = alpha-D-ribose 1-phosphate + guanine. It carries out the reaction inosine + phosphate = alpha-D-ribose 1-phosphate + hypoxanthine. The catalysed reaction is thymidine + phosphate = 2-deoxy-alpha-D-ribose 1-phosphate + thymine. The enzyme catalyses uridine + phosphate = alpha-D-ribose 1-phosphate + uracil. It catalyses the reaction xanthosine + phosphate = alpha-D-ribose 1-phosphate + xanthine. Catalyzes the phosphorolysis of diverse nucleosides, yielding D-ribose 1-phosphate and the respective free bases. Can use uridine, adenosine, guanosine, cytidine, thymidine, inosine and xanthosine as substrates. Also catalyzes the reverse reactions. This chain is Pyrimidine/purine nucleoside phosphorylase, found in Syntrophotalea carbinolica (strain DSM 2380 / NBRC 103641 / GraBd1) (Pelobacter carbinolicus).